The sequence spans 217 residues: Probable transaldolase (217 aa).

The active-site Schiff-base intermediate with substrate is lysine 83.

This sequence belongs to the transaldolase family. Type 3B subfamily.

It localises to the cytoplasm. It carries out the reaction D-sedoheptulose 7-phosphate + D-glyceraldehyde 3-phosphate = D-erythrose 4-phosphate + beta-D-fructose 6-phosphate. Its pathway is carbohydrate degradation; pentose phosphate pathway; D-glyceraldehyde 3-phosphate and beta-D-fructose 6-phosphate from D-ribose 5-phosphate and D-xylulose 5-phosphate (non-oxidative stage): step 2/3. In terms of biological role, transaldolase is important for the balance of metabolites in the pentose-phosphate pathway. The polypeptide is Probable transaldolase (Fervidobacterium nodosum (strain ATCC 35602 / DSM 5306 / Rt17-B1)).